A 271-amino-acid polypeptide reads, in one-letter code: Extracellular metalloprotease TRV_06892 (271 aa).

Positions 1 to 19 (MRFSVLLTGLAAAGSIATA) are cleaved as a signal peptide. Asn136 carries an N-linked (GlcNAc...) asparagine glycan. Zn(2+) is bound at residue His185. The active site involves Glu186. Zn(2+) is bound at residue His189. Residue Asn200 is glycosylated (N-linked (GlcNAc...) asparagine). Cys222 and Cys248 are joined by a disulfide.

This sequence belongs to the peptidase M43B family.

The protein resides in the secreted. Its function is as follows. Secreted metalloproteinase that allows assimilation of proteinaceous substrates. Plays a pivotal role as a pathogenicity determinant during infections and contributes to the ability of the pathogen to persist within the mammalian host. The chain is Extracellular metalloprotease TRV_06892 from Trichophyton verrucosum (strain HKI 0517).